The following is a 323-amino-acid chain: Ubiquinone biosynthesis protein COQ4, mitochondrial (323 aa).

Residues H203, D204, H207, and E219 each coordinate Zn(2+).

Belongs to the COQ4 family. Component of a multi-subunit COQ enzyme complex, composed of at least COQ3, COQ4, COQ5, COQ6, COQ7 and COQ9. Zn(2+) serves as cofactor.

Its subcellular location is the mitochondrion inner membrane. The enzyme catalyses a 4-hydroxy-3-methoxy-5-(all-trans-polyprenyl)benzoate + H(+) = a 2-methoxy-6-(all-trans-polyprenyl)phenol + CO2. It participates in cofactor biosynthesis; ubiquinone biosynthesis. Lyase that catalyzes the C1-decarboxylation of 4-hydroxy-3-methoxy-5-(all-trans-polyprenyl)benzoic acid into 2-methoxy-6-(all-trans-polyprenyl)phenol during ubiquinone biosynthesis. In Eremothecium gossypii (strain ATCC 10895 / CBS 109.51 / FGSC 9923 / NRRL Y-1056) (Yeast), this protein is Ubiquinone biosynthesis protein COQ4, mitochondrial.